The primary structure comprises 231 residues: Large ribosomal subunit protein uL1 (231 aa).

It belongs to the universal ribosomal protein uL1 family. In terms of assembly, part of the 50S ribosomal subunit.

Functionally, binds directly to 23S rRNA. The L1 stalk is quite mobile in the ribosome, and is involved in E site tRNA release. Its function is as follows. Protein L1 is also a translational repressor protein, it controls the translation of the L11 operon by binding to its mRNA. This Pseudomonas syringae pv. tomato (strain ATCC BAA-871 / DC3000) protein is Large ribosomal subunit protein uL1.